An 872-amino-acid chain; its full sequence is Telomerase component p95 (872 aa).

Disordered stretches follow at residues 55 to 75 and 471 to 492; these read NQDQ…NSNK and KNNK…ESTS. Positions 474–486 are enriched in basic and acidic residues; sequence KNQEETPETKDET.

Telomerase consist of two subunit, p80 and p95 that form a 1:1:1 complex with the 159 nt telomerase RNA.

It is found in the nucleus. The protein localises to the chromosome. Its subcellular location is the telomere. The catalysed reaction is DNA(n) + a 2'-deoxyribonucleoside 5'-triphosphate = DNA(n+1) + diphosphate. In terms of biological role, ribonucleoprotein DNA polymerase that catalyzes the de novo synthesis of telomeric simple sequence repeats. Subunit p95 contains some or all of the template-independent primer DNA-binding site termed the anchor site. The sequence is that of Telomerase component p95 from Tetrahymena thermophila.